A 294-amino-acid chain; its full sequence is 4-hydroxy-tetrahydrodipicolinate synthase (294 aa).

Residue threonine 47 participates in pyruvate binding. The Proton donor/acceptor role is filled by tyrosine 136. The Schiff-base intermediate with substrate role is filled by lysine 164. Valine 206 is a binding site for pyruvate.

The protein belongs to the DapA family. In terms of assembly, homotetramer; dimer of dimers.

It is found in the cytoplasm. The catalysed reaction is L-aspartate 4-semialdehyde + pyruvate = (2S,4S)-4-hydroxy-2,3,4,5-tetrahydrodipicolinate + H2O + H(+). The protein operates within amino-acid biosynthesis; L-lysine biosynthesis via DAP pathway; (S)-tetrahydrodipicolinate from L-aspartate: step 3/4. Its function is as follows. Catalyzes the condensation of (S)-aspartate-beta-semialdehyde [(S)-ASA] and pyruvate to 4-hydroxy-tetrahydrodipicolinate (HTPA). This Cyanothece sp. (strain PCC 7425 / ATCC 29141) protein is 4-hydroxy-tetrahydrodipicolinate synthase.